Consider the following 271-residue polypeptide: Pyridoxine kinase (271 aa).

Asn141 contributes to the ATP binding site. Glu144 contributes to the Mg(2+) binding site. ATP contacts are provided by residues 178–182 (TGGGK), Asp190, Ile206, Gly215, and Lys240.

It belongs to the ThiD family. As to quaternary structure, homodimer.

The catalysed reaction is pyridoxal + ATP = pyridoxal 5'-phosphate + ADP + H(+). Its function is as follows. Phosphorylates B6 vitamers; functions in a salvage pathway. Uses pyridoxal, pyridoxine, and pyridoxamine as substrates. Can also use hydroxymethylpyrimidine (HMP) as substrate. This Bacillus subtilis (strain 168) protein is Pyridoxine kinase (pdxK).